Reading from the N-terminus, the 346-residue chain is Archaeosine synthase subunit beta (346 aa).

The 241-residue stretch at 36–276 folds into the Radical SAM core domain; the sequence is GVQTKTLTVI…LRQAKAAHPE (241 aa). Residues cysteine 51, cysteine 59, and cysteine 62 each contribute to the [4Fe-4S] cluster site.

This sequence belongs to the radical SAM superfamily. RaSEA family. Forms a robust complex with the archaeosine synthase alpha subunit ArcS. This complex likely consists of an alpha(2)beta(2) heterotetrameric structure. Requires [4Fe-4S] cluster as cofactor.

It carries out the reaction 7-N-[(5S)-5-amino-5-carboxypentyl]formamidino-7-deazaguanosine(15) in tRNA + S-adenosyl-L-methionine = archaeosine(15) in tRNA + L-1-piperideine-6-carboxylate + 5'-deoxyadenosine + L-methionine + 2 H(+). It functions in the pathway tRNA modification; archaeosine-tRNA biosynthesis. Radical SAM enzyme involved in the synthesis of archaeosine, a modified nucleoside present in the dihydrouridine loop (D-loop) of archaeal tRNAs. Catalyzes the cleavage of the C(epsilon)-N bond of the lysine moiety of q0kN15-tRNA, leading to the formation of archaeosine at position 15 in tRNAs. The polypeptide is Archaeosine synthase subunit beta (Methanosarcina acetivorans (strain ATCC 35395 / DSM 2834 / JCM 12185 / C2A)).